The chain runs to 108 residues: UPF0145 protein LJ_1287 (108 aa).

It belongs to the UPF0145 family.

The sequence is that of UPF0145 protein LJ_1287 from Lactobacillus johnsonii (strain CNCM I-12250 / La1 / NCC 533).